A 117-amino-acid chain; its full sequence is Nascent polypeptide-associated complex protein (117 aa).

Residues 9–77 (PKQLKQMQRA…ARECDLEAEV (69 aa)) form the NAC-A/B domain.

This sequence belongs to the NAC-alpha family. As to quaternary structure, homodimer. Interacts with the ribosome. Binds ribosomal RNA.

Contacts the emerging nascent chain on the ribosome. This chain is Nascent polypeptide-associated complex protein, found in Methanothermobacter marburgensis (strain ATCC BAA-927 / DSM 2133 / JCM 14651 / NBRC 100331 / OCM 82 / Marburg) (Methanobacterium thermoautotrophicum).